A 138-amino-acid chain; its full sequence is Protein NrdI (138 aa).

It belongs to the NrdI family.

Functionally, probably involved in ribonucleotide reductase function. The protein is Protein NrdI of Paracoccus denitrificans (strain Pd 1222).